Consider the following 366-residue polypeptide: Latent membrane protein 1 (366 aa).

Residues 1 to 23 (MERDLERGPPGPPRPPLGPPLSS) lie on the Cytoplasmic side of the membrane. A helical transmembrane segment spans residues 24–44 (SIGLALLLLLLALLFWLYIVL). Residues 45 to 51 (SNWTGGA) are Extracellular-facing. A helical membrane pass occupies residues 52–72 (LLVLYSFALMLIIIILIIFIF). Topologically, residues 73–75 (RRD) are cytoplasmic. The helical transmembrane segment at 76–96 (LLCPLGGLGLLLLMVTLLLIA) threads the bilayer. At 97–106 (LWNLHGQALY) the chain is on the extracellular side. A helical transmembrane segment spans residues 107-127 (LGIVLFIFGCLLVLGLWIYFL). The Cytoplasmic segment spans residues 128–139 (EILWRLGATIWQ). The chain crosses the membrane as a helical span at residues 140–160 (LLAFILAFFLAIILLIIALYL). Topologically, residues 161-163 (QQN) are extracellular. A helical transmembrane segment spans residues 164–184 (WWTLLVDLLWLLLFMAILIWM). Residues 185-366 (YFHGPRHTDE…HGPVQLSYYD (182 aa)) are Cytoplasmic-facing. Residues 194 to 232 (EHHHDDSLPHPQQATDDSSHESDSNSNEGRHHLLVSGAG) are CTAR1. Residues 194–366 (EHHHDDSLPH…HGPVQLSYYD (173 aa)) are disordered. Residues 204 to 208 (PQQAT) carry the Interaction with host TRAF proteins motif. Positions 210 to 224 (DSSHESDSNSNEGRH) are enriched in basic and acidic residues. Low complexity-rich tracts occupy residues 251–267 (NGPQ…PQDP) and 337–346 (PHLPTLLLGT). Positions 332–366 (GGGGDPHLPTLLLGTSGSGGDDDDPHGPVQLSYYD) are CTAR2.

Belongs to the herpesviridae LMP-1 family. In terms of assembly, interacts (via PXQXT motif) with host tumor necrosis factor receptor-associated factor (TRAF) proteins TRAF1, TRAF2, TRAF3 and TRAF5. Interacts with human protein ZMYND11; leading to negatively regulate NF-kappa-B activation. Interacts with host UBE2I; this interaction induces the sumoylation of various cellular proteins. Interacts with host IRF7. Ubiquitinated on the N-terminus.

The protein resides in the host cell membrane. Its function is as follows. Acts as a CD40 functional homolog to prevent apoptosis of infected B-lymphocytes and drive their proliferation. Functions as a constitutively active tumor necrosis factor receptor that induces the activation of several signaling pathways, including those of the NF-kappa-B family. LMP1 signaling leads to up-regulation of antiapoptotic proteins and provide growth signals in latently infected cells. Interacts with host UBE2I and subsequently affects the sumoylation state of several cellular proteins. For example, induces the sumoylation of host IRF7 thereby limiting its transcriptional activity and modulating the activation of innate immune responses. Also inhibits host IFN-alpha-stimulated STAT2 nuclear translocation and interferon-stimulated response element transcriptional activity by interacting with and inhibiting host TYK2. Induces SUMO expression during viral latency thereby dysregulating the host sumoylation processes. In Homo sapiens (Human), this protein is Latent membrane protein 1 (LMP1).